Here is a 211-residue protein sequence, read N- to C-terminus: ATP-dependent dethiobiotin synthetase BioD 2 (211 aa).

An ATP-binding site is contributed by 13–18; it reads DIGKTI. A Mg(2+)-binding site is contributed by Thr17. Lys38 is a catalytic residue. Position 42 (Thr42) interacts with substrate. Residues Asp50, 115 to 118, and 175 to 176 each bind ATP; these read EGAG and NT. Residues Asp50 and Glu115 each contribute to the Mg(2+) site.

It belongs to the dethiobiotin synthetase family. Homodimer. Requires Mg(2+) as cofactor.

Its subcellular location is the cytoplasm. It carries out the reaction (7R,8S)-7,8-diammoniononanoate + CO2 + ATP = (4R,5S)-dethiobiotin + ADP + phosphate + 3 H(+). The protein operates within cofactor biosynthesis; biotin biosynthesis; biotin from 7,8-diaminononanoate: step 1/2. Catalyzes a mechanistically unusual reaction, the ATP-dependent insertion of CO2 between the N7 and N8 nitrogen atoms of 7,8-diaminopelargonic acid (DAPA, also called 7,8-diammoniononanoate) to form a ureido ring. The polypeptide is ATP-dependent dethiobiotin synthetase BioD 2 (Haemophilus ducreyi (strain 35000HP / ATCC 700724)).